The sequence spans 290 residues: Zinc finger matrin-type protein 3 (290 aa).

2 Matrin-type zinc fingers span residues 70-100 and 148-178; these read LFCK…KLRN and DYCK…RLRL. 2 disordered regions span residues 182 to 203 and 266 to 290; these read QSHS…EGSE and ESKQ…GYVQ. The Matrin-type 3 zinc-finger motif lies at 246–276; it reads FYCSMCNVGAGEEVEFRQHLESKQHKSKVSE. Positions 266–283 are enriched in basic and acidic residues; the sequence is ESKQHKSKVSEQRYRSEM.

In terms of assembly, interacts with dsRNA. Constitutively expressed in brain and testis. Also expressed in lung, kidney and spleen after whole body gamma irradiation.

The protein resides in the nucleus. It is found in the nucleolus. In terms of biological role, acts as a bona fide target gene of p53/TP53. May play a role in the TP53-dependent growth regulatory pathway. May contribute to TP53-mediated apoptosis by regulation of TP53 expression and translocation to the nucleus and nucleolus. This Mus musculus (Mouse) protein is Zinc finger matrin-type protein 3.